We begin with the raw amino-acid sequence, 333 residues long: Quinolinate synthase (333 aa).

Residues H41 and S58 each coordinate iminosuccinate. C103 is a binding site for [4Fe-4S] cluster. Residues Y129–N131 and S146 each bind iminosuccinate. Position 189 (C189) interacts with [4Fe-4S] cluster. Residues H215–E217 and T232 each bind iminosuccinate. [4Fe-4S] cluster is bound at residue C282.

Belongs to the quinolinate synthase family. Type 2 subfamily. It depends on [4Fe-4S] cluster as a cofactor.

Its subcellular location is the cytoplasm. It carries out the reaction iminosuccinate + dihydroxyacetone phosphate = quinolinate + phosphate + 2 H2O + H(+). It participates in cofactor biosynthesis; NAD(+) biosynthesis; quinolinate from iminoaspartate: step 1/1. Catalyzes the condensation of iminoaspartate with dihydroxyacetone phosphate to form quinolinate. This Prochlorococcus marinus (strain MIT 9303) protein is Quinolinate synthase.